Reading from the N-terminus, the 164-residue chain is Ecotin (164 aa).

The signal sequence occupies residues 1–20; sequence MKMFVPAVVFAALASASAWA. Residues Cys72 and Cys109 are joined by a disulfide bond.

Belongs to the protease inhibitor I11 (ecotin) family. As to quaternary structure, homodimer.

The protein localises to the periplasm. Functionally, general inhibitor of pancreatic serine proteases: inhibits chymotrypsin, trypsin, elastases, factor X, kallikrein as well as a variety of other proteases. This chain is Ecotin, found in Salmonella enteritidis PT4 (strain P125109).